Consider the following 74-residue polypeptide: ATP synthase subunit c (74 aa).

The next 2 helical transmembrane spans lie at 8-28 (FIGV…VSNI) and 52-72 (IGAG…MLLI).

The protein belongs to the ATPase C chain family. As to quaternary structure, F-type ATPases have 2 components, F(1) - the catalytic core - and F(0) - the membrane proton channel. F(1) has five subunits: alpha(3), beta(3), gamma(1), delta(1), epsilon(1). F(0) has three main subunits: a(1), b(2) and c(10-14). The alpha and beta chains form an alternating ring which encloses part of the gamma chain. F(1) is attached to F(0) by a central stalk formed by the gamma and epsilon chains, while a peripheral stalk is formed by the delta and b chains.

Its subcellular location is the cell inner membrane. Its function is as follows. F(1)F(0) ATP synthase produces ATP from ADP in the presence of a proton or sodium gradient. F-type ATPases consist of two structural domains, F(1) containing the extramembraneous catalytic core and F(0) containing the membrane proton channel, linked together by a central stalk and a peripheral stalk. During catalysis, ATP synthesis in the catalytic domain of F(1) is coupled via a rotary mechanism of the central stalk subunits to proton translocation. Key component of the F(0) channel; it plays a direct role in translocation across the membrane. A homomeric c-ring of between 10-14 subunits forms the central stalk rotor element with the F(1) delta and epsilon subunits. This is ATP synthase subunit c from Rickettsia bellii (strain RML369-C).